We begin with the raw amino-acid sequence, 252 residues long: 3-dehydroquinate dehydratase (252 aa).

3-dehydroquinate-binding positions include Ser-21, 46 to 48, and Arg-82; that span reads EWR. Residue His-143 is the Proton donor/acceptor of the active site. Residue Lys-170 is the Schiff-base intermediate with substrate of the active site. Arg-213, Ser-232, and Gln-236 together coordinate 3-dehydroquinate.

This sequence belongs to the type-I 3-dehydroquinase family. Homodimer.

It carries out the reaction 3-dehydroquinate = 3-dehydroshikimate + H2O. Its pathway is metabolic intermediate biosynthesis; chorismate biosynthesis; chorismate from D-erythrose 4-phosphate and phosphoenolpyruvate: step 3/7. Functionally, involved in the third step of the chorismate pathway, which leads to the biosynthesis of aromatic amino acids. Catalyzes the cis-dehydration of 3-dehydroquinate (DHQ) and introduces the first double bond of the aromatic ring to yield 3-dehydroshikimate. The chain is 3-dehydroquinate dehydratase from Escherichia coli O127:H6 (strain E2348/69 / EPEC).